Reading from the N-terminus, the 569-residue chain is MATDIATKELHKPVDVAEYLFRRLYEVGVRAVHGVPGDYNLAALDYLPKCGLHWVGNCNELNAGYAADGYARINGISALVTTFGVGELSALNAIAGAYSEFVPIVHIVGQPHTRSQRDGMLLHHTLGNGDFNVFAKMSGGISCAMGRLNETHEVATLIDNAIRECWLRSRPVYIGLPTDIIVKKIEGQRLDTPLDLSLPPNDPEKEDYVVDVVLKYLHAAKNPVILVDACAIRHRVLDEVHDLMETSGLPTFVAPMGKGAVDETRKNYGGVYAGTGSNPGVREQVESSDLILSIGAIKSDFNTTGFSYRIGQLNTIDFHSTYVRVRYSEYPDINMKGVLRKVVQRMGHVNALPVQRLSNALPDNEKGSSSQEITHAWLWPIVGQWLKERDIVITETGTANFGIWDTRFPANVTAISQVLWGSIGYSVGACQGAALAAKEQNNRRTVLFVGDGSLQLTVQEISTMIRNNLNPIVFVICNQGYTIERFIHGWDEAYNDIQPWDIKGLPVVFGAKDKYKGYRVKTRDELTKLFANDEFNSVPCLQLVELHMPRDDAPASLKLTAESAAHRNA.

Residues aspartate 38 and histidine 124 each coordinate pyruvate. Thiamine diphosphate contacts are provided by residues threonine 398 and 421–423 (GSI). Aspartate 451 lines the Mg(2+) pocket. Thiamine diphosphate-binding positions include 452–453 (GS) and 478–483 (NQGYTI). Mg(2+)-binding residues include asparagine 478 and glycine 480. Glutamate 484 is a pyruvate binding site.

Belongs to the TPP enzyme family. Homotetramer. It depends on Mg(2+) as a cofactor. Requires thiamine diphosphate as cofactor.

It catalyses the reaction a 2-oxocarboxylate + H(+) = an aldehyde + CO2. The enzyme catalyses pyruvate + H(+) = acetaldehyde + CO2. This chain is Pyruvate decarboxylase (pdcA), found in Aspergillus terreus (strain NIH 2624 / FGSC A1156).